A 98-amino-acid chain; its full sequence is MSLVHMNVIVAFTLSLVGLLMYRSHLMSALLCMEGMMLSLFVLAALTILNSHFTLASMMPIILLVFAACEAAIGLALLVTISNTYGTDYVQNLNLLQC.

The next 3 membrane-spanning stretches (helical) occupy residues 1–21 (MSLV…GLLM), 29–49 (ALLC…LTIL), and 61–81 (IILL…LVTI).

The protein belongs to the complex I subunit 4L family. As to quaternary structure, core subunit of respiratory chain NADH dehydrogenase (Complex I) which is composed of 45 different subunits.

It localises to the mitochondrion inner membrane. The catalysed reaction is a ubiquinone + NADH + 5 H(+)(in) = a ubiquinol + NAD(+) + 4 H(+)(out). Its function is as follows. Core subunit of the mitochondrial membrane respiratory chain NADH dehydrogenase (Complex I) which catalyzes electron transfer from NADH through the respiratory chain, using ubiquinone as an electron acceptor. Part of the enzyme membrane arm which is embedded in the lipid bilayer and involved in proton translocation. This chain is NADH-ubiquinone oxidoreductase chain 4L (MT-ND4L), found in Ziphius cavirostris (Cuvier's beaked whale).